The following is a 444-amino-acid chain: Glutamate--tRNA ligase 1 (444 aa).

The 'HIGH' region motif lies at 7 to 17 (PSPTGYLHVGN). Residues 238-242 (KISKR) carry the 'KMSKS' region motif. Lys241 provides a ligand contact to ATP.

It belongs to the class-I aminoacyl-tRNA synthetase family. Glutamate--tRNA ligase type 1 subfamily. Monomer.

It is found in the cytoplasm. The enzyme catalyses tRNA(Glu) + L-glutamate + ATP = L-glutamyl-tRNA(Glu) + AMP + diphosphate. Functionally, catalyzes the attachment of glutamate to tRNA(Glu) in a two-step reaction: glutamate is first activated by ATP to form Glu-AMP and then transferred to the acceptor end of tRNA(Glu). The protein is Glutamate--tRNA ligase 1 of Wolbachia pipientis subsp. Culex pipiens (strain wPip).